The chain runs to 406 residues: Mitochondrial potassium channel (406 aa).

A mitochondrion-targeting transit peptide spans 1–35; that stretch reads MTGCSPVFAMQHVVGVPRILVRRTFLGTDVTMTRT. Residues 36–198 lie on the Mitochondrial matrix side of the membrane; the sequence is LCSPGPREKR…KERTRAERTK (163 aa). Positions 113–140 form a coiled coil; sequence VREAREGLEAQQTKLKEVRDRLDRVSRE. A helical membrane pass occupies residues 199 to 219; the sequence is NWSLIGSVLGALIGVAGSTYV. The Mitochondrial intermembrane segment spans residues 220 to 382; the sequence is NRVRLQELKA…LEAQANRNTV (163 aa). The chain crosses the membrane as a helical span at residues 383-403; the sequence is SSTLVTCVTFLATLPLLYMLF. The Mitochondrial matrix portion of the chain corresponds to 404-406; it reads KTS.

As to quaternary structure, the mitochondrial potassium channel (mitoK(ATP)) is composed of 4 subunits of CCDC51/MITOK and 4 subunits of ABCB8/MITOSUR.

Its subcellular location is the mitochondrion inner membrane. It catalyses the reaction K(+)(in) = K(+)(out). Inhibited by ATP via mitoK(ATP) channel. Its function is as follows. Pore-forming subunit of the mitochondrial ATP-gated potassium channel (mitoK(ATP)). Together with ATP-binding subunit ABCB8/MITOSUR of the mitoK(ATP) channel, mediates ATP-dependent K(+) currents across the mitochondrial inner membrane. An increase in ATP intracellular levels closes the channel, inhibiting K(+) transport, whereas a decrease in ATP levels enhances K(+) uptake in the mitochondrial matrix. May contribute to the homeostatic control of cellular metabolism under stress conditions by regulating the mitochondrial matrix volume. This is Mitochondrial potassium channel from Mus musculus (Mouse).